The primary structure comprises 86 residues: Small ribosomal subunit protein uS17 (86 aa).

This sequence belongs to the universal ribosomal protein uS17 family. In terms of assembly, part of the 30S ribosomal subunit.

Functionally, one of the primary rRNA binding proteins, it binds specifically to the 5'-end of 16S ribosomal RNA. This Methylococcus capsulatus (strain ATCC 33009 / NCIMB 11132 / Bath) protein is Small ribosomal subunit protein uS17.